The primary structure comprises 336 residues: MSYDEKHLMEGIYREKSGDKFIYYYFDNNEEVTTKDIERINKLRIPPAWTNVWVARDPNSPIQAIGTDSKGRKQYRYNEIHIQGAEKEKFKRLYDFIKSIPKLEKAMVRDNNFPFYNKNRVISLMLQMVRDYNMRVGKEVYARQNKSYGISSLRKKHVKISPGVITLNFKGKSGQRLNYTIRNDFYIDGIKMLMKLEGDRLFQYISTDEDGNEKIMRVNDRDLNKYIQENMGSEFTIKDFRTFGANLYFIQALLSETRKRTPKNRKTIKKNIANAFKSTARQLKHTGAVSKKSYVMNYTLELYQNNPEFFIEHKNDDPIDFLLRILKSYRKDVLGE.

Residues 79–336 (EIHIQGAEKE…KSYRKDVLGE (258 aa)) form the Topo IB-type catalytic domain. The active-site O-(3'-phospho-DNA)-tyrosine intermediate is Y294.

It belongs to the type IB topoisomerase family. In terms of assembly, monomer.

The protein localises to the virion. It catalyses the reaction ATP-independent breakage of single-stranded DNA, followed by passage and rejoining.. Functionally, releases the supercoiling and torsional tension of DNA introduced during the DNA replication and transcription by transiently cleaving and rejoining one strand of the DNA duplex. Introduces a single-strand break via transesterification at a target site in duplex DNA. The scissile phosphodiester is attacked by the catalytic tyrosine of the enzyme, resulting in the formation of a DNA-(3'-phosphotyrosyl)-enzyme intermediate and the expulsion of a 5'-OH DNA strand. The free DNA strand then undergoes passage around the unbroken strand thus removing DNA supercoils. Finally, in the religation step, the DNA 5'-OH attacks the covalent intermediate to expel the active-site tyrosine and restore the DNA phosphodiester backbone. Cleaves DNA after CCCTT sequence. The chain is DNA topoisomerase 1B (TOP1E) from Acanthamoeba polyphaga mimivirus (APMV).